The following is a 62-amino-acid chain: Photosystem II reaction center protein Z (62 aa).

2 consecutive transmembrane segments (helical) span residues 8 to 28 (ALAA…VAYA) and 41 to 61 (FVGS…NFFV).

The protein belongs to the PsbZ family. As to quaternary structure, PSII is composed of 1 copy each of membrane proteins PsbA, PsbB, PsbC, PsbD, PsbE, PsbF, PsbH, PsbI, PsbJ, PsbK, PsbL, PsbM, PsbT, PsbX, PsbY, PsbZ, Psb30/Ycf12, peripheral proteins PsbO, CyanoQ (PsbQ), PsbU, PsbV and a large number of cofactors. It forms dimeric complexes.

It localises to the cellular thylakoid membrane. In terms of biological role, may control the interaction of photosystem II (PSII) cores with the light-harvesting antenna, regulates electron flow through the 2 photosystem reaction centers. PSII is a light-driven water plastoquinone oxidoreductase, using light energy to abstract electrons from H(2)O, generating a proton gradient subsequently used for ATP formation. The protein is Photosystem II reaction center protein Z of Picosynechococcus sp. (strain ATCC 27264 / PCC 7002 / PR-6) (Agmenellum quadruplicatum).